We begin with the raw amino-acid sequence, 115 residues long: Large ribosomal subunit protein bL19 (115 aa).

Belongs to the bacterial ribosomal protein bL19 family.

Functionally, this protein is located at the 30S-50S ribosomal subunit interface and may play a role in the structure and function of the aminoacyl-tRNA binding site. This Nitratidesulfovibrio vulgaris (strain ATCC 29579 / DSM 644 / CCUG 34227 / NCIMB 8303 / VKM B-1760 / Hildenborough) (Desulfovibrio vulgaris) protein is Large ribosomal subunit protein bL19.